A 208-amino-acid polypeptide reads, in one-letter code: UPF0637 protein BcerKBAB4_3786 (208 aa).

It belongs to the UPF0637 family.

This is UPF0637 protein BcerKBAB4_3786 from Bacillus mycoides (strain KBAB4) (Bacillus weihenstephanensis).